The following is a 261-amino-acid chain: tRNA(His) guanylyltransferase (261 aa).

Mg(2+) contacts are provided by aspartate 29, glycine 30, and aspartate 76. GTP is bound by residues 29-34 and 75-76; these read DGKGFH and SD.

Belongs to the tRNA(His) guanylyltransferase family. The cofactor is Mg(2+).

It carries out the reaction a 5'-end ribonucleotide-tRNA(His) + GTP + ATP + H2O = a 5'-end phospho-guanosine-ribonucleotide-tRNA(His) + AMP + 2 diphosphate + H(+). Its function is as follows. Adds a GMP to the 5'-end of tRNA(His) after transcription and RNase P cleavage. The chain is tRNA(His) guanylyltransferase (thg1) from Schizosaccharomyces pombe (strain 972 / ATCC 24843) (Fission yeast).